A 540-amino-acid chain; its full sequence is NADH-quinone oxidoreductase subunit N (540 aa).

A run of 14 helical transmembrane segments spans residues leucine 24–leucine 44, leucine 54–threonine 74, proline 88–alanine 108, alanine 158–phenylalanine 178, leucine 184–leucine 204, tyrosine 219–glycine 239, alanine 263–phenylalanine 283, proline 295–leucine 315, proline 331–glutamine 351, methionine 357–asparagine 377, methionine 385–valine 405, valine 428–phenylalanine 448, glycine 462–valine 482, and methionine 505–proline 525.

Belongs to the complex I subunit 2 family. As to quaternary structure, NDH-1 is composed of 14 different subunits. Subunits NuoA, H, J, K, L, M, N constitute the membrane sector of the complex.

Its subcellular location is the cell membrane. It carries out the reaction a quinone + NADH + 5 H(+)(in) = a quinol + NAD(+) + 4 H(+)(out). Functionally, NDH-1 shuttles electrons from NADH, via FMN and iron-sulfur (Fe-S) centers, to quinones in the respiratory chain. The immediate electron acceptor for the enzyme in this species is believed to be a menaquinone. Couples the redox reaction to proton translocation (for every two electrons transferred, four hydrogen ions are translocated across the cytoplasmic membrane), and thus conserves the redox energy in a proton gradient. This Rhodococcus opacus (strain B4) protein is NADH-quinone oxidoreductase subunit N.